The primary structure comprises 202 residues: Dephospho-CoA kinase (202 aa).

The DPCK domain maps to 4–202; that stretch reads FLGLTGGIAT…EGVCHKSGMS (199 aa). ATP is bound at residue 12 to 17; sequence ATGKTT.

The protein belongs to the CoaE family.

It is found in the cytoplasm. It catalyses the reaction 3'-dephospho-CoA + ATP = ADP + CoA + H(+). It functions in the pathway cofactor biosynthesis; coenzyme A biosynthesis; CoA from (R)-pantothenate: step 5/5. Catalyzes the phosphorylation of the 3'-hydroxyl group of dephosphocoenzyme A to form coenzyme A. This chain is Dephospho-CoA kinase, found in Latilactobacillus sakei subsp. sakei (strain 23K) (Lactobacillus sakei subsp. sakei).